The primary structure comprises 271 residues: Interleukin-1 alpha (271 aa).

The propeptide occupies 1-112; sequence MAKVPDMFED…DSEEEIIKPR (112 aa). Lys82 carries the post-translational modification N6-acetyllysine. Residues Lys82 and Lys83 are each lipidated (N6-myristoyl lysine). The tract at residues 82–86 is nuclear localization signal (NLS); the sequence is KKRRL. At Ser87 the chain carries Phosphoserine. N-linked (GlcNAc...) asparagine glycans are attached at residues Asn102 and Asn141.

Belongs to the IL-1 family. Monomer. Interacts with TMED10; the interaction mediates the translocation from the cytoplasm into the ERGIC (endoplasmic reticulum-Golgi intermediate compartment) and thereby secretion. Interacts with IL1R1. Interacts with S100A13; this interaction is the first step in the export of IL1A, followed by direct translocation of this complex across the plasma membrane. Post-translationally, acetylated within its nuclear localization sequence, which impacts subcellular localization. In terms of processing, proteolytic processed by CAPN1 in a calcium-dependent manner. Cleavage from 31 kDa precursor to 18 kDa biologically active molecules. Phosphorylated. Phosphorylation greatly enhances susceptibility to digestion and promotes the conversion of pre-IL1A alpha to the biologically active IL1A.

The protein localises to the nucleus. It localises to the cytoplasm. The protein resides in the secreted. Cytokine constitutively present intracellularly in nearly all resting non-hematopoietic cells that plays an important role in inflammation and bridges the innate and adaptive immune systems. After binding to its receptor IL1R1 together with its accessory protein IL1RAP, forms the high affinity interleukin-1 receptor complex. Signaling involves the recruitment of adapter molecules such as MYD88, IRAK1 or IRAK4. In turn, mediates the activation of NF-kappa-B and the three MAPK pathways p38, p42/p44 and JNK pathways. Within the cell, acts as an alarmin and cell death results in its liberation in the extracellular space after disruption of the cell membrane to induce inflammation and alert the host to injury or damage. In addition to its role as a danger signal, which occurs when the cytokine is passively released by cell necrosis, directly senses DNA damage and acts as a signal for genotoxic stress without loss of cell integrity. This Homo sapiens (Human) protein is Interleukin-1 alpha (IL1A).